Consider the following 144-residue polypeptide: Large ribosomal subunit protein uL16 (144 aa).

The protein belongs to the universal ribosomal protein uL16 family. As to quaternary structure, part of the 50S ribosomal subunit.

Functionally, binds 23S rRNA and is also seen to make contacts with the A and possibly P site tRNAs. This Clostridium perfringens (strain ATCC 13124 / DSM 756 / JCM 1290 / NCIMB 6125 / NCTC 8237 / Type A) protein is Large ribosomal subunit protein uL16.